Consider the following 196-residue polypeptide: ATP-dependent Clp protease proteolytic subunit (196 aa).

The Nucleophile role is filled by S96. H121 is a catalytic residue.

It belongs to the peptidase S14 family. In terms of assembly, fourteen ClpP subunits assemble into 2 heptameric rings which stack back to back to give a disk-like structure with a central cavity, resembling the structure of eukaryotic proteasomes.

It localises to the cytoplasm. It catalyses the reaction Hydrolysis of proteins to small peptides in the presence of ATP and magnesium. alpha-casein is the usual test substrate. In the absence of ATP, only oligopeptides shorter than five residues are hydrolyzed (such as succinyl-Leu-Tyr-|-NHMec, and Leu-Tyr-Leu-|-Tyr-Trp, in which cleavage of the -Tyr-|-Leu- and -Tyr-|-Trp bonds also occurs).. Cleaves peptides in various proteins in a process that requires ATP hydrolysis. Has a chymotrypsin-like activity. Plays a major role in the degradation of misfolded proteins. The protein is ATP-dependent Clp protease proteolytic subunit of Streptococcus pneumoniae (strain ATCC 700669 / Spain 23F-1).